The chain runs to 439 residues: Dolichyl-diphosphooligosaccharide--protein glycosyltransferase 48 kDa subunit (439 aa).

The N-terminal stretch at 1–26 (MEPSTAARAWALFWLLPPLLGAVCAS) is a signal peptide. Residues 27 to 410 (GPRTLVLLDN…YERFIPSAYP (384 aa)) are Lumenal-facing. Residues 411-430 (YYASAFSMMLGLFIFSIVFL) traverse the membrane as a helical segment. Topologically, residues 431 to 439 (HMKEKEKSD) are cytoplasmic.

This sequence belongs to the DDOST 48 kDa subunit family. In terms of assembly, component of the oligosaccharyltransferase (OST) complex. OST exists in two different complex forms which contain common core subunits RPN1, RPN2, OST48, OST4, DAD1 and TMEM258, either STT3A or STT3B as catalytic subunits, and form-specific accessory subunits. STT3A complex assembly occurs through the formation of 3 subcomplexes. Subcomplex 1 contains RPN1 and TMEM258, subcomplex 2 contains the STT3A-specific subunits STT3A, DC2/OSTC, and KCP2 as well as the core subunit OST4, and subcomplex 3 contains RPN2, DAD1, and OST48. The STT3A complex can form stable complexes with the Sec61 complex or with both the Sec61 and TRAP complexes. Interacts with SMIM22.

The protein localises to the endoplasmic reticulum membrane. It participates in protein modification; protein glycosylation. Its function is as follows. Subunit of the oligosaccharyl transferase (OST) complex that catalyzes the initial transfer of a defined glycan (Glc(3)Man(9)GlcNAc(2) in eukaryotes) from the lipid carrier dolichol-pyrophosphate to an asparagine residue within an Asn-X-Ser/Thr consensus motif in nascent polypeptide chains, the first step in protein N-glycosylation. N-glycosylation occurs cotranslationally and the complex associates with the Sec61 complex at the channel-forming translocon complex that mediates protein translocation across the endoplasmic reticulum (ER). All subunits are required for a maximal enzyme activity. Required for the assembly of both SST3A- and SS3B-containing OST complexes. This is Dolichyl-diphosphooligosaccharide--protein glycosyltransferase 48 kDa subunit from Pongo abelii (Sumatran orangutan).